A 319-amino-acid polypeptide reads, in one-letter code: Taste receptor type 2 member 14 (319 aa).

Residues 1–7 (MDGVIKS) lie on the Extracellular side of the membrane. Residues 8–28 (IFTFILILEFIIGNLGNSFIV) traverse the membrane as a helical segment. The Cytoplasmic segment spans residues 29–55 (LVNCIDWVKRRKISLVDQLLIALAISR). The chain crosses the membrane as a helical span at residues 56–76 (ISLVWSIFGSWCVSVVFPALF). The Extracellular segment spans residues 77–87 (ATEKLLRMLTN). 2 residues coordinate cholesterol: T86 and W89. The helical transmembrane segment at 88–108 (IWTVTNHFSVWLATILGTFYF) threads the bilayer. Over 109 to 129 (LKIANFSNSIFLYLKWRVKKV) the chain is Cytoplasmic. The chain crosses the membrane as a helical span at residues 130–150 (VLVLLLVTLVLLFLNILLINI). The Extracellular segment spans residues 151–184 (HINASINGYRGNMTCSSASCNFIRFSSAIALTST). Residues N153 and N162 are each glycosylated (N-linked (GlcNAc...) asparagine). A180 lines the cholesterol pocket. A helical transmembrane segment spans residues 185-205 (VFILIPFTLSLATFLLLSFSL). Over 206-232 (WKHRKKMQHTVKGYRDVSTKAHRGVMQ) the chain is Cytoplasmic. Residues 233 to 253 (TVITFLLLYAVFFLTFFVSIW) traverse the membrane as a helical segment. Topologically, residues 254–261 (ISERLKEN) are extracellular. A helical transmembrane segment spans residues 262 to 282 (QIIILSEMMGLAYPSGHSCVL). Cholesterol contacts are provided by I265 and E268. Over 283 to 317 (ILGNKKLRQASLSVLWWLRYRFKDGELSGHKEFRE) the chain is Cytoplasmic.

It belongs to the G-protein coupled receptor T2R family. As to quaternary structure, core component of the TAS2R14-GNAI1 complex, consisting of TAS2R14, GNAI1, GNB1 and GNG2; within the complex interacts with GNAI1. Core component of the TAS2R14-GNAT3 complex, consisting of TAS2R14, GNAT3, GNB1 and GNG2; within the complex interacts with GNAT3. Core component of the TAS2R14-GNAS2 complex, consisting of TAS2R14, GNAS2, GNB1 and GNG2; within the complex interacts with GNAS2.

It is found in the membrane. The enzyme catalyses Ca(2+)(in) = Ca(2+)(out). The catalysed reaction is 3',5'-cyclic AMP(in) = 3',5'-cyclic AMP(out). With respect to regulation, basal activity is enhanced by binding to bitter tastants, such as flufenamic acid and aristolochic acid. Regulated by cholesterol in a concentration-dependent manner. Gustducin-linked G-protein coupled receptor that plays a role in the perception of bitterness. The activity of this receptor stimulates GNAT3, activating the gustducin G-protein pathway. Likely plays a role in sensing the chemical composition of the gastrointestinal content and other extra-oral tissues via the inhibitory G-protein pathways. The polypeptide is Taste receptor type 2 member 14 (TAS2R14) (Papio hamadryas (Hamadryas baboon)).